A 319-amino-acid chain; its full sequence is Translocon-associated protein subunit alpha (319 aa).

A signal peptide spans 1-21 (MRLLPRLLLLFLLAFPAAVLL). At 22–208 (RGGPGGSLAV…EREDGLDGET (187 aa)) the chain is on the lumenal side. A compositionally biased stretch (acidic residues) spans 35–76 (LTEDEETVEDPIIEDEDDEAEVEEDEPTDLAEEKEEEEDVSS). The disordered stretch occupies residues 35 to 84 (LTEDEETVEDPIIEDEDDEAEVEEDEPTDLAEEKEEEEDVSSEPEASPSA). N-linked (GlcNAc...) asparagine glycosylation is found at Asn-137 and Asn-192. A helical membrane pass occupies residues 209 to 229 (IFMYMFLAGLGLLVVVGLHQL). Residues 230–319 (LESRKRKRPI…SLRQLAVCGI (90 aa)) are Cytoplasmic-facing. Ser-248 is modified (phosphoserine). Residue Thr-261 is modified to Phosphothreonine.

Belongs to the TRAP-alpha family. As to quaternary structure, heterotetramer of TRAP-alpha, TRAP-beta, TRAP-delta and TRAP-gamma. Interacts with palmitoylated calnexin (CALX), the interaction is required for efficient folding of glycosylated proteins.

It localises to the endoplasmic reticulum membrane. Functionally, TRAP proteins are part of a complex whose function is to bind calcium to the ER membrane and thereby regulate the retention of ER resident proteins. May be involved in the recycling of the translocation apparatus after completion of the translocation process or may function as a membrane-bound chaperone facilitating folding of translocated proteins. In Rattus norvegicus (Rat), this protein is Translocon-associated protein subunit alpha (Ssr1).